The primary structure comprises 220 residues: Ribonuclease HII (220 aa).

The RNase H type-2 domain maps to 32-220 (KHIAGIDEAG…FAPIKGRFDC (189 aa)). Asp-38, Glu-39, and Asp-130 together coordinate a divalent metal cation.

It belongs to the RNase HII family. It depends on Mn(2+) as a cofactor. The cofactor is Mg(2+).

The protein resides in the cytoplasm. It carries out the reaction Endonucleolytic cleavage to 5'-phosphomonoester.. Its function is as follows. Endonuclease that specifically degrades the RNA of RNA-DNA hybrids. This chain is Ribonuclease HII, found in Brucella canis (strain ATCC 23365 / NCTC 10854 / RM-666).